We begin with the raw amino-acid sequence, 398 residues long: MESVLSKYEDQITIFTDYLEEYPDTDELVWILGKQHLLKTEKSKLLSDISARLWFTYRRKFSPIGGTGPSSDAGWGCMLRCGQMMLAQALICRHLGRDWSWEKQKEQPKEYQRILQCFLDRKDCCYSIHQMAQMGVGEGKSIGEWFGPNTVAQVLKKLALFDEWNSLAVYVSMDNTVVIEDIKKMCRVLPLSADTAGDRPPDSLTASNQSKGTSAYCSAWKPLLLIVPLRLGINQINPVYVDAFKECFKMPQSLGALGGKPNNAYYFIGFLGDELIFLDPHTTQTFVDTEENGTVNDQTFHCLQSPQRMNILNLDPSVALGFFCKEEKDFDNWCSLVQKEILKENLRMFELVQKHPSHWPPFVPPAKPEVTTTGAEFIDSTEQLEEFDLEEDFEILSV.

C77 functions as the Nucleophile in the catalytic mechanism. Active-site residues include D279 and H281. An LIR motif is present at residues F393–L396.

The protein belongs to the peptidase C54 family. Interacts with ATG9A; the interaction is direct.

The protein localises to the cytoplasm. The enzyme catalyses [protein]-C-terminal L-amino acid-glycyl-phosphatidylethanolamide + H2O = [protein]-C-terminal L-amino acid-glycine + a 1,2-diacyl-sn-glycero-3-phosphoethanolamine. With respect to regulation, inhibited by N-ethylmaleimide. Redox-regulated during autophagy since reducing conditions activate ATG4A whereas an oxidizing environment such as the presence of H(2)O(2) inhibits its activity. Functionally, cysteine protease that plays a key role in autophagy by mediating both proteolytic activation and delipidation of ATG8 family proteins. The protease activity is required for proteolytic activation of ATG8 family proteins: cleaves the C-terminal amino acid of ATG8 proteins to reveal a C-terminal glycine. Exposure of the glycine at the C-terminus is essential for ATG8 proteins conjugation to phosphatidylethanolamine (PE) and insertion to membranes, which is necessary for autophagy. Preferred substrate is GABARAPL2 followed by MAP1LC3A and GABARAP. Protease activity is also required to counteract formation of high-molecular weight conjugates of ATG8 proteins (ATG8ylation): acts as a deubiquitinating-like enzyme that removes ATG8 conjugated to other proteins, such as ATG3. In addition to the protease activity, also mediates delipidation of ATG8 family proteins. Catalyzes delipidation of PE-conjugated forms of ATG8 proteins during macroautophagy. Compared to ATG4B, the major protein for proteolytic activation of ATG8 proteins, shows weaker ability to cleave the C-terminal amino acid of ATG8 proteins, while it displays stronger delipidation activity. Involved in phagophore growth during mitophagy independently of its protease activity and of ATG8 proteins: acts by regulating ATG9A trafficking to mitochondria and promoting phagophore-endoplasmic reticulum contacts during the lipid transfer phase of mitophagy. This is Cysteine protease ATG4A from Homo sapiens (Human).